Reading from the N-terminus, the 298-residue chain is Tyrosine recombinase XerC (298 aa).

A Core-binding (CB) domain is found at 2-88; it reads TDLHTDVERY…ALRSFFDWLV (87 aa). A Tyr recombinase domain is found at 109 to 288; sequence HLPKNIDVDD…DFQHLASVYD (180 aa). Catalysis depends on residues arginine 148, lysine 172, histidine 240, arginine 243, and histidine 266. Tyrosine 275 serves as the catalytic O-(3'-phospho-DNA)-tyrosine intermediate.

It belongs to the 'phage' integrase family. XerC subfamily. In terms of assembly, forms a cyclic heterotetrameric complex composed of two molecules of XerC and two molecules of XerD, in which XerC interacts with XerD via its C-terminal region, XerD interacts with XerC via its C-terminal region and so on.

Its subcellular location is the cytoplasm. With respect to regulation, ftsK may regulate the catalytic switch between XerC and XerD in the heterotetrameric complex during the two steps of the recombination process. Its function is as follows. Site-specific tyrosine recombinase, which acts by catalyzing the cutting and rejoining of the recombining DNA molecules. Binds cooperatively to specific DNA consensus sequences that are separated from XerD binding sites by a short central region, forming the heterotetrameric XerC-XerD complex that recombines DNA substrates. The complex is essential to convert dimers of the bacterial chromosome into monomers to permit their segregation at cell division. It also contributes to the segregational stability of plasmids. In the complex XerC specifically exchanges the top DNA strands. This chain is Tyrosine recombinase XerC, found in Escherichia coli O139:H28 (strain E24377A / ETEC).